Here is a 136-residue protein sequence, read N- to C-terminus: Small ribosomal subunit protein uS9 (136 aa).

The protein belongs to the universal ribosomal protein uS9 family.

This is Small ribosomal subunit protein uS9 from Borrelia hermsii (strain HS1 / DAH).